The primary structure comprises 353 residues: MELMVVEADAKLRVARLIDANLDRAREGLRVIEDWCRFGLDRDDLVLPLKDWRQRLGQQHHDRYRRARSTATDVAAGLGHPAQTSRCSAPAIIKANASRVQEALRVLEEFGRNLDPDLASTAAEIRYGLYDLEVRILEACGRQHRQERLEGAKLCLITDPDRDNNLERLLHGVEAALMAGVSLVQYRRKQGNDKQRLLEAQALKTLCSRFEALFIVNDRIDLALLVDADGVHLGQDDLPLSEARQLLGPERLLGRSTHRLEHLLEAQQAGADYLGVGPVFATKTKRDLSPAGLSWVTEASRHAAVPWFAIGGIDIETIPSVRAAGAQRVAVVSAIMSSNDPEEASRTLLQTLA.

Positions 1–128 (MELMVVEADA…ASTAAEIRYG (128 aa)) are unknown. The interval 129–353 (LYDLEVRILE…ASRTLLQTLA (225 aa)) is thiamine-phosphate synthase. 4-amino-2-methyl-5-(diphosphooxymethyl)pyrimidine is bound by residues 185-189 (QYRRK) and Asn-217. Mg(2+) contacts are provided by Asp-218 and Asp-237. Ser-256 serves as a coordination point for 4-amino-2-methyl-5-(diphosphooxymethyl)pyrimidine. 282–284 (TKT) serves as a coordination point for 2-[(2R,5Z)-2-carboxy-4-methylthiazol-5(2H)-ylidene]ethyl phosphate. Residue Lys-285 participates in 4-amino-2-methyl-5-(diphosphooxymethyl)pyrimidine binding. Gly-312 lines the 2-[(2R,5Z)-2-carboxy-4-methylthiazol-5(2H)-ylidene]ethyl phosphate pocket.

It belongs to the thiamine-phosphate synthase family. Mg(2+) serves as cofactor.

It catalyses the reaction 2-[(2R,5Z)-2-carboxy-4-methylthiazol-5(2H)-ylidene]ethyl phosphate + 4-amino-2-methyl-5-(diphosphooxymethyl)pyrimidine + 2 H(+) = thiamine phosphate + CO2 + diphosphate. It carries out the reaction 2-(2-carboxy-4-methylthiazol-5-yl)ethyl phosphate + 4-amino-2-methyl-5-(diphosphooxymethyl)pyrimidine + 2 H(+) = thiamine phosphate + CO2 + diphosphate. The catalysed reaction is 4-methyl-5-(2-phosphooxyethyl)-thiazole + 4-amino-2-methyl-5-(diphosphooxymethyl)pyrimidine + H(+) = thiamine phosphate + diphosphate. The protein operates within cofactor biosynthesis; thiamine diphosphate biosynthesis; thiamine phosphate from 4-amino-2-methyl-5-diphosphomethylpyrimidine and 4-methyl-5-(2-phosphoethyl)-thiazole: step 1/1. In terms of biological role, condenses 4-methyl-5-(beta-hydroxyethyl)thiazole monophosphate (THZ-P) and 2-methyl-4-amino-5-hydroxymethyl pyrimidine pyrophosphate (HMP-PP) to form thiamine monophosphate (TMP). The chain is Thiamine-phosphate synthase from Synechococcus sp. (strain CC9311).